Consider the following 289-residue polypeptide: GNAFVVSLALADLVVALYPYPLVLLAIFHNGWTLGEMHCKVSGFVMGLSVIGSIFNITAIAINRYCYICHSFAYDKVYSCWNTMLYVSLIWVLTVIATVPNFFVGSLKYDPRIYSCTFVQTASSYYTIAVVVIHFIVPITVVSFCYLRIWVLVLQVRRRVKSETKPRLKPSDFRNFLTMFVVFVIFAFCWAPLNFIGLAVAINPSEMAPKVPEWLFIISYFMAYFNSCLNAIIYGLLNQNFRNEYKRILMSLWMPRLFFQDTSKGGTDGQKSKPSPALNNNDQMKTDTL.

The Cytoplasmic segment spans residues 1–2 (GN). Residues 3–23 (AFVVSLALADLVVALYPYPLV) form a helical membrane-spanning segment. Over 24 to 41 (LLAIFHNGWTLGEMHCKV) the chain is Extracellular. Cys-39 and Cys-116 form a disulfide bridge. The helical transmembrane segment at 42-62 (SGFVMGLSVIGSIFNITAIAI) threads the bilayer. The Cytoplasmic segment spans residues 63–81 (NRYCYICHSFAYDKVYSCW). The helical transmembrane segment at 82–102 (NTMLYVSLIWVLTVIATVPNF) threads the bilayer. Topologically, residues 103-126 (FVGSLKYDPRIYSCTFVQTASSYY) are extracellular. Residues 127–147 (TIAVVVIHFIVPITVVSFCYL) traverse the membrane as a helical segment. Topologically, residues 148-179 (RIWVLVLQVRRRVKSETKPRLKPSDFRNFLTM) are cytoplasmic. A helical membrane pass occupies residues 180 to 200 (FVVFVIFAFCWAPLNFIGLAV). Residues 201–213 (AINPSEMAPKVPE) are Extracellular-facing. Residues 214 to 234 (WLFIISYFMAYFNSCLNAIIY) traverse the membrane as a helical segment. The Cytoplasmic segment spans residues 235-289 (GLLNQNFRNEYKRILMSLWMPRLFFQDTSKGGTDGQKSKPSPALNNNDQMKTDTL). Residues 264–289 (KGGTDGQKSKPSPALNNNDQMKTDTL) are disordered.

The protein belongs to the G-protein coupled receptor 1 family. Brain and kidney, with trace levels in lungs.

The protein resides in the cell membrane. Functionally, high affinity receptor for melatonin. The activity of this receptor is mediated by pertussis toxin sensitive G proteins that inhibits adenylate cyclase activity. This is Melatonin receptor type 1B from Gallus gallus (Chicken).